Reading from the N-terminus, the 297-residue chain is Protoheme IX farnesyltransferase (297 aa).

8 consecutive transmembrane segments (helical) span residues 15–35, 39–59, 91–111, 112–132, 139–159, 166–186, 220–240, and 265–285; these read VVALILFTAVVGMFLAVPAPY, GLLVLSASIGISMVAASAAVF, VWGVFLGFIGLGILQLFVNII, TVVLTFISLIGYTIVYTLYLK, IVIGGAAGATPPVLGWTAVSG, ACLLFLIVFIWTPPHFWALAI, LLLVSLLPYLSGMSGLIYLVI, and AWSTFMYSINYLMLLFIALLF.

Belongs to the UbiA prenyltransferase family. Protoheme IX farnesyltransferase subfamily.

Its subcellular location is the cell inner membrane. It carries out the reaction heme b + (2E,6E)-farnesyl diphosphate + H2O = Fe(II)-heme o + diphosphate. Its pathway is porphyrin-containing compound metabolism; heme O biosynthesis; heme O from protoheme: step 1/1. In terms of biological role, converts heme B (protoheme IX) to heme O by substitution of the vinyl group on carbon 2 of heme B porphyrin ring with a hydroxyethyl farnesyl side group. The sequence is that of Protoheme IX farnesyltransferase from Vesicomyosocius okutanii subsp. Calyptogena okutanii (strain HA).